We begin with the raw amino-acid sequence, 89 residues long: uncharacterized protein (89 aa).

An N-terminal signal peptide occupies residues 1 to 27 (MKKAAAVLLSLGLVFGFSYGAGHVAEA).

This is an uncharacterized protein from Bacillus subtilis (strain 168).